A 274-amino-acid polypeptide reads, in one-letter code: NADPH-dependent 7-cyano-7-deazaguanine reductase (274 aa).

Valine 80–serine 82 serves as a coordination point for substrate. Residue serine 82 to lysine 83 coordinates NADPH. Cysteine 181 (thioimide intermediate) is an active-site residue. Catalysis depends on aspartate 188, which acts as the Proton donor. Histidine 220–glutamate 221 is a binding site for substrate. Arginine 249–glycine 250 contributes to the NADPH binding site.

Belongs to the GTP cyclohydrolase I family. QueF type 2 subfamily. In terms of assembly, homodimer.

Its subcellular location is the cytoplasm. The enzyme catalyses 7-aminomethyl-7-carbaguanine + 2 NADP(+) = 7-cyano-7-deazaguanine + 2 NADPH + 3 H(+). Its pathway is tRNA modification; tRNA-queuosine biosynthesis. Functionally, catalyzes the NADPH-dependent reduction of 7-cyano-7-deazaguanine (preQ0) to 7-aminomethyl-7-deazaguanine (preQ1). This is NADPH-dependent 7-cyano-7-deazaguanine reductase from Burkholderia lata (strain ATCC 17760 / DSM 23089 / LMG 22485 / NCIMB 9086 / R18194 / 383).